A 47-amino-acid chain; its full sequence is Putative beta-neurotoxin (47 aa).

The region spanning 1-47 is the LCN-type CS-alpha/beta domain; sequence KEGYMGSDGCKMSCVINDQFCDTECQAKLKGSTGYCYFXGLACYXXG. Intrachain disulfides connect cysteine 14-cysteine 36 and cysteine 21-cysteine 43.

In terms of tissue distribution, expressed by the venom gland.

The protein resides in the secreted. Functionally, causes transient paralysis of the rear legs of and spasms in insects (A.domestica). The chain is Putative beta-neurotoxin from Rhopalurus junceus (Caribbean blue scorpion).